The following is a 180-amino-acid chain: ATP synthase subunit delta, chloroplastic (180 aa).

The protein belongs to the ATPase delta chain family. F-type ATPases have 2 components, F(1) - the catalytic core - and F(0) - the membrane proton channel. F(1) has five subunits: alpha(3), beta(3), gamma(1), delta(1), epsilon(1). CF(0) has four main subunits: a(1), b(1), b'(1) and c(10-14). The alpha and beta chains form an alternating ring which encloses part of the gamma chain. F(1) is attached to F(0) by a central stalk formed by the gamma and epsilon chains, while a peripheral stalk is formed by the delta, b and b' chains.

It localises to the plastid. The protein resides in the chloroplast thylakoid membrane. F(1)F(0) ATP synthase produces ATP from ADP in the presence of a proton or sodium gradient. F-type ATPases consist of two structural domains, F(1) containing the extramembraneous catalytic core and F(0) containing the membrane proton channel, linked together by a central stalk and a peripheral stalk. During catalysis, ATP synthesis in the catalytic domain of F(1) is coupled via a rotary mechanism of the central stalk subunits to proton translocation. In terms of biological role, this protein is part of the stalk that links CF(0) to CF(1). It either transmits conformational changes from CF(0) to CF(1) or is implicated in proton conduction. The protein is ATP synthase subunit delta, chloroplastic of Emiliania huxleyi (Coccolithophore).